The following is an 89-amino-acid chain: Conotoxin Bu5 (89 aa).

The N-terminal stretch at 1-22 (MKLTCVLIVAVLFLTACQLATA) is a signal peptide. Positions 23 to 49 (ENSREEQGYSAVRSSDQIQDSDLKLTK) are excised as a propeptide. 3 disulfide bridges follow: C51–C66, C58–C70, and C65–C79. Residue C79 is modified to Cysteine amide. Positions 80 to 89 (GVSIDYYDSR) are excised as a propeptide.

This sequence belongs to the conotoxin O1 superfamily. In terms of tissue distribution, expressed by the venom duct.

It is found in the secreted. This chain is Conotoxin Bu5, found in Conus bullatus (Bubble cone).